A 312-amino-acid chain; its full sequence is Phospho-N-acetylmuramoyl-pentapeptide-transferase (312 aa).

Helical transmembrane passes span 1–21 (MMVVAALLSWFLLGLFIHYSK), 48–68 (GVAFVLALLLVFVGLLAFGGI), 76–96 (EVMILLAALGMGVVGGIDDFL), 115–135 (FPLQVLVALLFAGFAAPLASH), 140–160 (GFMSIGGYPIFDMLFIAFVMV), 165–185 (AFNFTDGLDGLLAGVGMIVLL), 214–234 (VFMGDMGSHAIGAVAAGAYAL), 238–258 (VWLLPIAAIIPVAAVLSVVIQ), and 289–309 (VTLRFWVVTGIATALTWWLMG).

This sequence belongs to the glycosyltransferase 4 family. MraY subfamily. Requires Mg(2+) as cofactor.

Its subcellular location is the cell membrane. The enzyme catalyses UDP-N-acetyl-alpha-D-muramoyl-L-alanyl-gamma-D-glutamyl-meso-2,6-diaminopimeloyl-D-alanyl-D-alanine + di-trans,octa-cis-undecaprenyl phosphate = di-trans,octa-cis-undecaprenyl diphospho-N-acetyl-alpha-D-muramoyl-L-alanyl-D-glutamyl-meso-2,6-diaminopimeloyl-D-alanyl-D-alanine + UMP. It functions in the pathway cell wall biogenesis; peptidoglycan biosynthesis. Its function is as follows. Catalyzes the initial step of the lipid cycle reactions in the biosynthesis of the cell wall peptidoglycan: transfers peptidoglycan precursor phospho-MurNAc-pentapeptide from UDP-MurNAc-pentapeptide onto the lipid carrier undecaprenyl phosphate, yielding undecaprenyl-pyrophosphoryl-MurNAc-pentapeptide, known as lipid I. This Deinococcus radiodurans (strain ATCC 13939 / DSM 20539 / JCM 16871 / CCUG 27074 / LMG 4051 / NBRC 15346 / NCIMB 9279 / VKM B-1422 / R1) protein is Phospho-N-acetylmuramoyl-pentapeptide-transferase.